We begin with the raw amino-acid sequence, 214 residues long: Adenylate kinase (214 aa).

10 to 15 (GAGKGT) is a binding site for ATP. The interval 30–59 (STGDMFRDHKARGTEIGKQVQAIMDAGGLV) is NMP. AMP is bound by residues threonine 31, arginine 36, 57-59 (GLV), 85-88 (GYPR), and glutamine 92. The interval 126–163 (GRRSCPRCGAVYHVSQNPPHRAGFCDRDDAALVQREDD) is LID. Residue arginine 127 participates in ATP binding. 2 residues coordinate Zn(2+): cysteine 130 and cysteine 133. 136-137 (VY) provides a ligand contact to ATP. The Zn(2+) site is built by cysteine 150 and aspartate 153. Arginine 160 and arginine 171 together coordinate AMP. Glycine 199 lines the ATP pocket.

Belongs to the adenylate kinase family. Monomer.

It is found in the cytoplasm. It catalyses the reaction AMP + ATP = 2 ADP. It functions in the pathway purine metabolism; AMP biosynthesis via salvage pathway; AMP from ADP: step 1/1. Its function is as follows. Catalyzes the reversible transfer of the terminal phosphate group between ATP and AMP. Plays an important role in cellular energy homeostasis and in adenine nucleotide metabolism. This chain is Adenylate kinase, found in Anaeromyxobacter dehalogenans (strain 2CP-1 / ATCC BAA-258).